Here is a 453-residue protein sequence, read N- to C-terminus: UDP-N-acetylmuramoylalanine--D-glutamate ligase (453 aa).

115–121 contacts ATP; that stretch reads GSNGKTT.

The protein belongs to the MurCDEF family.

It is found in the cytoplasm. The catalysed reaction is UDP-N-acetyl-alpha-D-muramoyl-L-alanine + D-glutamate + ATP = UDP-N-acetyl-alpha-D-muramoyl-L-alanyl-D-glutamate + ADP + phosphate + H(+). It participates in cell wall biogenesis; peptidoglycan biosynthesis. Its function is as follows. Cell wall formation. Catalyzes the addition of glutamate to the nucleotide precursor UDP-N-acetylmuramoyl-L-alanine (UMA). The polypeptide is UDP-N-acetylmuramoylalanine--D-glutamate ligase (Koribacter versatilis (strain Ellin345)).